Here is a 209-residue protein sequence, read N- to C-terminus: Uridine kinase (209 aa).

16–23 (GGSGSGKT) lines the ATP pocket.

The protein belongs to the uridine kinase family.

It localises to the cytoplasm. The catalysed reaction is uridine + ATP = UMP + ADP + H(+). It carries out the reaction cytidine + ATP = CMP + ADP + H(+). It functions in the pathway pyrimidine metabolism; CTP biosynthesis via salvage pathway; CTP from cytidine: step 1/3. The protein operates within pyrimidine metabolism; UMP biosynthesis via salvage pathway; UMP from uridine: step 1/1. The chain is Uridine kinase from Lactiplantibacillus plantarum (strain ATCC BAA-793 / NCIMB 8826 / WCFS1) (Lactobacillus plantarum).